The chain runs to 371 residues: Cytochrome b (371 aa).

A run of 4 helical transmembrane segments spans residues 25–45, 69–90, 105–125, and 170–190; these read FGSM…FLAI, WMMQ…YIHI, WMSG…GYVL, and FFAL…LHII. Residues His-75 and His-89 each contribute to the heme b site. Heme b is bound by residues His-174 and His-188. His-193 contacts a ubiquinone. Transmembrane regions (helical) follow at residues 218–238, 280–300, 312–332, and 339–358; these read HKDL…VSFL, LGGA…PFTH, LSQL…WAAT, and FIII…LSTP.

Belongs to the cytochrome b family. As to quaternary structure, the cytochrome bc1 complex contains 3 respiratory subunits (MT-CYB, CYC1 and UQCRFS1), 2 core proteins (UQCRC1 and UQCRC2) and probably 6 low-molecular weight proteins. The cofactor is heme b.

It localises to the mitochondrion inner membrane. Functionally, component of the ubiquinol-cytochrome c reductase complex (complex III or cytochrome b-c1 complex) that is part of the mitochondrial respiratory chain. The b-c1 complex mediates electron transfer from ubiquinol to cytochrome c. Contributes to the generation of a proton gradient across the mitochondrial membrane that is then used for ATP synthesis. The protein is Cytochrome b (MT-CYB) of Antaresia maculosa (Eastern small blotched python).